We begin with the raw amino-acid sequence, 610 residues long: Chaperone protein DnaK (610 aa).

Residue T173 is modified to Phosphothreonine; by autocatalysis. Disordered regions lie at residues 525–544 and 576–610; these read ENIG…ALKT and AAQQ…DDKK. Positions 529 to 542 are enriched in basic and acidic residues; it reads EEDKKSAEEKKDAL. Low complexity predominate over residues 576–592; that stretch reads AAQQQQQAQGANAGQNN. Basic and acidic residues predominate over residues 599-610; the sequence is AEFKEVKDDDKK.

The protein belongs to the heat shock protein 70 family.

Its function is as follows. Acts as a chaperone. In Staphylococcus aureus (strain Mu3 / ATCC 700698), this protein is Chaperone protein DnaK.